Here is an 85-residue protein sequence, read N- to C-terminus: Protein AC4 (85 aa).

Gly2 carries the N-myristoyl glycine; by host lipid modification. The tract at residues 44-63 (RAPMSNPTSRKTGTVSNGDC) is disordered. The span at 46 to 62 (PMSNPTSRKTGTVSNGD) shows a compositional bias: polar residues.

The protein belongs to the geminiviridae protein AC4/C4 family.

It localises to the host cell membrane. Its function is as follows. Pathogenicity determinant. May act as a suppressor of RNA-mediated gene silencing, also known as post-transcriptional gene silencing (PTGS), a mechanism of plant viral defense that limits the accumulation of viral RNAs. This is Protein AC4 from Potato yellow mosaic virus (isolate Venezuela) (PYMV).